The chain runs to 308 residues: Transcription factor zip-2 (308 aa).

Polar residues predominate over residues 217 to 229 (QSSSSSTVETTIT). The segment at 217 to 277 (QSSSSSTVET…RESKEERERL (61 aa)) is disordered. Residues 242-305 (SSDYRHKRDK…EDYKRLVMMF (64 aa)) form the bZIP domain. The basic motif stretch occupies residues 246–276 (RHKRDKNNLASQKSRQKRQAKIRESKEERER). Basic and acidic residues predominate over residues 266–277 (KIRESKEERERL). The segment at 277-291 (LEKRKVQLQAMVLTL) is leucine-zipper.

Belongs to the bZIP family. C/EBP subfamily. As to expression, expressed in the pharynx and throughout the intestine.

Its subcellular location is the nucleus. Functionally, transcription factor that binds to the promoter and the enhancer regions of target genes. May act together with the bZIP transcription factor, cebp-2. Involved in responding to mitochondrial damage. Plays a role in the delay of age-associated mitochondrial fragmentation and muscle decline. Has a protective role in response to infection by the Gram-negative bacterium P.aeruginosa. Required to prevent P.aeruginosa ToxA-mediated lethality. Required for the activation of several infection response genes including irg-1 and irg-2 following P.aeruginosa infection; target gene activation may involve effects of the bacterial toxin, ToxA, and perhaps other toxins. This chain is Transcription factor zip-2, found in Caenorhabditis elegans.